The following is a 70-amino-acid chain: U-scoloptoxin(04)-Er3a (70 aa).

An N-terminal signal peptide occupies residues methionine 1–alanine 24.

The protein belongs to the scoloptoxin-04 family. In terms of processing, contains 2 disulfide bonds. Expressed by the venom gland.

It is found in the secreted. The sequence is that of U-scoloptoxin(04)-Er3a from Ethmostigmus rubripes (Giant centipede).